The sequence spans 1210 residues: V-type proton ATPase 116 kDa subunit a 4 (1210 aa).

Residues 1 to 715 (MSSFSNVGFV…YTIITFPFLF (715 aa)) are Cytoplasmic-facing. The segment covering 259 to 271 (SSKISFTSSSPSP) has biased composition (low complexity). Residues 259-292 (SSKISFTSSSPSPQRNPKNEAQKNSSSKREETSM) are disordered. The span at 275–291 (PKNEAQKNSSSKREETS) shows a compositional bias: basic and acidic residues. A coiled-coil region spans residues 339–405 (FVKQMRRCEE…EREFLDLNNN (67 aa)). The helical transmembrane segment at 716 to 736 (AVMFGDAAHGAILLLAALFFI) threads the bilayer. Topologically, residues 737-760 (RNERKIESKKIRDEIFNTFYGGRY) are extracellular. A helical membrane pass occupies residues 761–781 (IMMLMGIFSIYTGFLYNDAFA). Residues 782–855 (KSFNVFGSGW…SFLNSMKMKA (74 aa)) are Cytoplasmic-facing. A helical membrane pass occupies residues 856–876 (SVIIGITQMTFGVFLSVLNHI). Topologically, residues 877–892 (HFKSYIDIISNFIPQV) are extracellular. The helical transmembrane segment at 893 to 913 (IFLSCIFIYLCIQIIVKWIFF) threads the bilayer. At 914 to 976 (SVNAENVFGF…WYPNQRLVET (63 aa)) the chain is on the cytoplasmic side. A helical transmembrane segment spans residues 977–997 (ILISISLACIPIMLFGKPLWV). Over 998–1127 (RFVTSKRHKL…NETIAMCLKP (130 aa)) the chain is Extracellular. N-linked (GlcNAc...) asparagine glycosylation is found at asparagine 1010, asparagine 1019, and asparagine 1118. The helical transmembrane segment at 1128-1148 (VVACVAFFIFASLSLSILIMM) threads the bilayer. The Cytoplasmic segment spans residues 1149–1210 (EGLSAFLHAL…DISSGQHLHI (62 aa)).

This sequence belongs to the V-ATPase 116 kDa subunit family. As to quaternary structure, V-ATPase is a heteromultimeric enzyme made up of two complexes: the ATP-hydrolytic V1 complex and the proton translocation V0 complex. The V1 complex consists of three catalytic AB heterodimers that form a heterohexamer, three peripheral stalks each consisting of EG heterodimers, one central rotor including subunits D and F, and the regulatory subunits C and H. The proton translocation complex V0 consists of the proton transport subunit a, a ring of proteolipid subunits c9c'', rotary subunit d, subunits e and f, and the accessory subunits vah-19/Ac45 and vah-20/PRR. As to expression, expressed in uterus.

The protein localises to the membrane. Functionally, subunit of the V0 complex of vacuolar(H+)-ATPase (V-ATPase), a multisubunit enzyme composed of a peripheral complex (V1) that hydrolyzes ATP and a membrane integral complex (V0) that translocates protons. V-ATPase is responsible for acidifying and maintaining the pH of intracellular compartments and in some cell types, is targeted to the plasma membrane, where it is responsible for acidifying the extracellular environment. The polypeptide is V-type proton ATPase 116 kDa subunit a 4 (Caenorhabditis elegans).